We begin with the raw amino-acid sequence, 956 residues long: Glutamate receptor ionotropic, kainate 4 (956 aa).

The first 20 residues, 1 to 20, serve as a signal peptide directing secretion; that stretch reads MPRVSAPLVLLPAWLVMVAC. Residues 21-545 lie on the Extracellular side of the membrane; it reads SPHSLRIAAI…YFSFLDPFSP (525 aa). Residues N158, N220, N272, N286, N323, N408, N415, and N479 are each glycosylated (N-linked (GlcNAc...) asparagine). Residues G500, T502, and R507 each coordinate L-glutamate. The helical transmembrane segment at 546 to 566 threads the bilayer; it reads GVWLFMLLAYLAVSCVLFLVA. At 567-623 the chain is on the cytoplasmic side; the sequence is RLTPYEWYSPHPCAQGRCNLLVNQYSLGNSLWFPVGGFMQQGSTIAPRALSTRCVSG. A helical transmembrane segment spans residues 624–644; the sequence is VWWAFTLIIISSYTANLAAFL. Topologically, residues 645-804 are extracellular; that stretch reads TVQRMDVPIE…HRAKGLGMEN (160 aa). L-glutamate is bound by residues S674, S675, and E723. N-linked (GlcNAc...) asparagine glycosylation occurs at N736. A helical membrane pass occupies residues 805 to 825; the sequence is IGGIFVVLICGLIVAIFMAML. Residues 826–956 are Cytoplasmic-facing; it reads EFLWTLRHSE…EKTTNSSEPE (131 aa). Disordered regions lie at residues 863-889 and 931-956; these read RRRAAVPPPRPPIPEERRPRGTATLSN and LRARPSPARSEESLEWEKTTNSSEPE. Residues 939-948 are compositionally biased toward basic and acidic residues; the sequence is RSEESLEWEK.

This sequence belongs to the glutamate-gated ion channel (TC 1.A.10.1) family. GRIK4 subfamily. Homodimer. Can form functional heteromeric receptors with GRIK1, GRIK2 and GRIK3.

It is found in the cell membrane. The protein localises to the postsynaptic cell membrane. The protein resides in the presynaptic cell membrane. Ionotropic glutamate receptor that functions as a cation-permeable ligand-gated ion channel. Cannot form functional channels on its own. Shows channel activity only in heteromeric assembly with GRIK1, GRIK2 and GRIK3 subunits. The chain is Glutamate receptor ionotropic, kainate 4 (GRIK4) from Homo sapiens (Human).